The chain runs to 89 residues: Protein PerC (89 aa).

In terms of biological role, transcriptional activator of eaeA/bfpA expression in enteropathogenic E.coli. This is Protein PerC (perC) from Escherichia coli O111:H-.